Reading from the N-terminus, the 463-residue chain is Cysteine--tRNA ligase (463 aa).

Zn(2+) is bound at residue C33. The 'HIGH' region signature appears at 35-45; the sequence is PTVYDFAHIGN. The Zn(2+) site is built by C221, H246, and E250. The 'KMSKS' region motif lies at 279–283; it reads KMSKS. An ATP-binding site is contributed by K282.

It belongs to the class-I aminoacyl-tRNA synthetase family. As to quaternary structure, monomer. It depends on Zn(2+) as a cofactor.

It localises to the cytoplasm. It carries out the reaction tRNA(Cys) + L-cysteine + ATP = L-cysteinyl-tRNA(Cys) + AMP + diphosphate. The chain is Cysteine--tRNA ligase from Rhizobium leguminosarum bv. trifolii (strain WSM2304).